Reading from the N-terminus, the 146-residue chain is 3-dehydroquinate dehydratase (146 aa).

The active-site Proton acceptor is the Y22. Substrate-binding residues include N73, H79, and D86. The Proton donor role is filled by H99. Substrate-binding positions include 100-101 and R110; that span reads VS.

This sequence belongs to the type-II 3-dehydroquinase family. In terms of assembly, homododecamer.

The catalysed reaction is 3-dehydroquinate = 3-dehydroshikimate + H2O. It participates in metabolic intermediate biosynthesis; chorismate biosynthesis; chorismate from D-erythrose 4-phosphate and phosphoenolpyruvate: step 3/7. Catalyzes a trans-dehydration via an enolate intermediate. The chain is 3-dehydroquinate dehydratase from Kineococcus radiotolerans (strain ATCC BAA-149 / DSM 14245 / SRS30216).